The following is a 620-amino-acid chain: Chaperone protein HscA homolog (620 aa).

Belongs to the heat shock protein 70 family.

Functionally, chaperone involved in the maturation of iron-sulfur cluster-containing proteins. Has a low intrinsic ATPase activity which is markedly stimulated by HscB. The protein is Chaperone protein HscA homolog of Bordetella pertussis (strain Tohama I / ATCC BAA-589 / NCTC 13251).